We begin with the raw amino-acid sequence, 208 residues long: Uracil phosphoribosyltransferase (208 aa).

Residues Arg-78, Arg-103, and 130-138 (DPMFATGGT) contribute to the 5-phospho-alpha-D-ribose 1-diphosphate site. Residues Ile-193 and 198-200 (GDA) contribute to the uracil site. A 5-phospho-alpha-D-ribose 1-diphosphate-binding site is contributed by Asp-199.

The protein belongs to the UPRTase family. The cofactor is Mg(2+).

It catalyses the reaction UMP + diphosphate = 5-phospho-alpha-D-ribose 1-diphosphate + uracil. Its pathway is pyrimidine metabolism; UMP biosynthesis via salvage pathway; UMP from uracil: step 1/1. With respect to regulation, allosterically activated by GTP. In terms of biological role, catalyzes the conversion of uracil and 5-phospho-alpha-D-ribose 1-diphosphate (PRPP) to UMP and diphosphate. The chain is Uracil phosphoribosyltransferase from Campylobacter concisus (strain 13826).